A 733-amino-acid chain; its full sequence is Photosystem I P700 chlorophyll a apoprotein A2 (733 aa).

A run of 8 helical transmembrane segments spans residues 46–69, 135–158, 175–199, 273–291, 330–353, 369–395, 417–439, and 516–534; these read IFASHFGHLAIIFLWTSGTLFHVA, LYQGAVFLLILSSLFLFAGWLHLQ, LNHHLAGLFGVSSLAWTGHLVHVAI, IAHHHLAIAVLFIIAGHMY, LHFQLGLALASLGVITSLVAQHMY, AALYTHHQYIAGFLMVGAFAHGAIFFV, ALISHLSWVSLFLGFHTLGLYVH, and FLVHHAIALGLHTTTLILV. [4Fe-4S] cluster is bound by residues Cys558 and Cys567. The next 2 membrane-spanning stretches (helical) occupy residues 574-595 and 642-664; these read AFYLAMFWMLNTLGWLTFYWHW and LSVWAWMFLFGHLVWATGFMFLI. Residues His653, Met661, and Tyr669 each coordinate chlorophyll a. Residue Trp670 participates in phylloquinone binding. The chain crosses the membrane as a helical span at residues 706–726; that stretch reads LVGLAHFTVGYVLTYAAFLIA.

This sequence belongs to the PsaA/PsaB family. The PsaA/B heterodimer binds the P700 chlorophyll special pair and subsequent electron acceptors. PSI consists of a core antenna complex that captures photons, and an electron transfer chain that converts photonic excitation into a charge separation. The cyanobacterial PSI reaction center is composed of one copy each of PsaA,B,C,D,E,F,I,J,K,L,M and X, and forms trimeric complexes. It depends on PSI electron transfer chain: 5 chlorophyll a, 1 chlorophyll a', 2 phylloquinones and 3 4Fe-4S clusters. PSI core antenna: 90 chlorophyll a, 22 carotenoids, 3 phospholipids and 1 galactolipid. P700 is a chlorophyll a/chlorophyll a' dimer, A0 is one or more chlorophyll a, A1 is one or both phylloquinones and FX is a shared 4Fe-4S iron-sulfur center. as a cofactor.

The protein localises to the cellular thylakoid membrane. The enzyme catalyses reduced [plastocyanin] + hnu + oxidized [2Fe-2S]-[ferredoxin] = oxidized [plastocyanin] + reduced [2Fe-2S]-[ferredoxin]. Functionally, psaA and PsaB bind P700, the primary electron donor of photosystem I (PSI), as well as the electron acceptors A0, A1 and FX. PSI is a plastocyanin/cytochrome c6-ferredoxin oxidoreductase, converting photonic excitation into a charge separation, which transfers an electron from the donor P700 chlorophyll pair to the spectroscopically characterized acceptors A0, A1, FX, FA and FB in turn. Oxidized P700 is reduced on the lumenal side of the thylakoid membrane by plastocyanin or cytochrome c6. This chain is Photosystem I P700 chlorophyll a apoprotein A2, found in Picosynechococcus sp. (strain ATCC 27264 / PCC 7002 / PR-6) (Agmenellum quadruplicatum).